Reading from the N-terminus, the 314-residue chain is Serine/threonine-protein phosphatase PP2A-4 catalytic subunit (314 aa).

The Mn(2+) site is built by Asp-62, His-64, Asp-90, and Asn-122. His-123 (proton donor) is an active-site residue. 2 residues coordinate Mn(2+): His-172 and His-246.

It belongs to the PPP phosphatase family. PP-2A subfamily. Requires Mn(2+) as cofactor.

The protein resides in the cytoplasm. It carries out the reaction O-phospho-L-seryl-[protein] + H2O = L-seryl-[protein] + phosphate. The enzyme catalyses O-phospho-L-threonyl-[protein] + H2O = L-threonyl-[protein] + phosphate. This chain is Serine/threonine-protein phosphatase PP2A-4 catalytic subunit (PP2A4), found in Oryza sativa subsp. japonica (Rice).